Consider the following 338-residue polypeptide: 5-dehydro-2-deoxygluconokinase (338 aa).

The protein belongs to the carbohydrate kinase PfkB family.

It carries out the reaction 5-dehydro-2-deoxy-D-gluconate + ATP = 6-phospho-5-dehydro-2-deoxy-D-gluconate + ADP + H(+). It functions in the pathway polyol metabolism; myo-inositol degradation into acetyl-CoA; acetyl-CoA from myo-inositol: step 5/7. Functionally, catalyzes the phosphorylation of 5-dehydro-2-deoxy-D-gluconate (2-deoxy-5-keto-D-gluconate or DKG) to 6-phospho-5-dehydro-2-deoxy-D-gluconate (DKGP). This Clostridium perfringens (strain ATCC 13124 / DSM 756 / JCM 1290 / NCIMB 6125 / NCTC 8237 / Type A) protein is 5-dehydro-2-deoxygluconokinase.